We begin with the raw amino-acid sequence, 217 residues long: 3-isopropylmalate dehydratase small subunit (217 aa).

The protein belongs to the LeuD family. LeuD type 1 subfamily. As to quaternary structure, heterodimer of LeuC and LeuD.

The catalysed reaction is (2R,3S)-3-isopropylmalate = (2S)-2-isopropylmalate. The protein operates within amino-acid biosynthesis; L-leucine biosynthesis; L-leucine from 3-methyl-2-oxobutanoate: step 2/4. Catalyzes the isomerization between 2-isopropylmalate and 3-isopropylmalate, via the formation of 2-isopropylmaleate. The polypeptide is 3-isopropylmalate dehydratase small subunit (Delftia acidovorans (strain DSM 14801 / SPH-1)).